The primary structure comprises 287 residues: Elongation factor Ts (287 aa).

Residues 80–83 are involved in Mg(2+) ion dislocation from EF-Tu; it reads TDFL.

Belongs to the EF-Ts family.

The protein resides in the cytoplasm. Functionally, associates with the EF-Tu.GDP complex and induces the exchange of GDP to GTP. It remains bound to the aminoacyl-tRNA.EF-Tu.GTP complex up to the GTP hydrolysis stage on the ribosome. The sequence is that of Elongation factor Ts from Pseudomonas putida (strain ATCC 700007 / DSM 6899 / JCM 31910 / BCRC 17059 / LMG 24140 / F1).